We begin with the raw amino-acid sequence, 603 residues long: MPRFITELKRTHSCGELTKADIGKEVVLFGWVNNRRDHGGAVFIDLRDRAGLTQVVFEEDVRPDVHELAGQLRLEYCVGVRGKVVSRGGNVNPKLPTGEIEVHASDLEIFNRSEPAPFQIEDKIDTGEEKRLQYRYLDLRRAPLQQTLMTRAKVNHLTRNYFTDKGFLELETPFMVKYTPGGARNFLVPSRLNPGKFYALAESPQLFKQLYMMAGFDRYFQIVRCFRDEDLRLDRQPEFTQIDVEMSFVEQNDVFDVMEGLVVKLWKEVLGIEIPRPFQRMPFEESMAKYGNDKPDLRFDMPHVVLTDLVRQHDGGGVPLMHEAVKAKGIVKAMRVPASANFSRTEIDKLEEYVKGMGAKGLARAKVGEGGEWTQSPLAKTITPALRQAINDACEAKAGDLLLFQFGKESVVHTVMANLRVHLAKRMGLIPEYGSGGAWRFLWVVNPPLFEYDEESGQWAAAHHAFTRPHDSDLQFLESDPGKVNCYRYDLVLNGFEIGGGSIRLHDPEVQARVFKAMGISDEEARSKFGFLLDALKMGAPPHGGIALGMDRLVMLLTGAESLRDVVAWPKTQKGTDLMTGAPGDVDARQLRELYVKSTFEPK.

Residues 205–208 (QLFK) are aspartate. An L-aspartate-binding site is contributed by Arg-227. ATP is bound by residues 227–229 (RDE) and Gln-236. Position 463 (His-463) interacts with L-aspartate. Position 497 (Glu-497) interacts with ATP. L-aspartate is bound at residue Arg-504. 549-552 (GMDR) lines the ATP pocket.

This sequence belongs to the class-II aminoacyl-tRNA synthetase family. Type 1 subfamily. In terms of assembly, homodimer.

The protein localises to the cytoplasm. The catalysed reaction is tRNA(Asx) + L-aspartate + ATP = L-aspartyl-tRNA(Asx) + AMP + diphosphate. Aspartyl-tRNA synthetase with relaxed tRNA specificity since it is able to aspartylate not only its cognate tRNA(Asp) but also tRNA(Asn). Reaction proceeds in two steps: L-aspartate is first activated by ATP to form Asp-AMP and then transferred to the acceptor end of tRNA(Asp/Asn). This Anaeromyxobacter dehalogenans (strain 2CP-C) protein is Aspartate--tRNA(Asp/Asn) ligase.